A 609-amino-acid chain; its full sequence is Proteasome-associated ATPase (609 aa).

The interval 1–25 is disordered; it reads MADSERSEAFGTPDDTPLSSNDAAE. Positions 19 to 96 form a coiled coil; sequence SSNDAAELEQ…LREEVDRLGQ (78 aa). 296 to 301 is a binding site for ATP; it reads GCGKTL. Residues 608 to 609 are docks into pockets in the proteasome alpha-ring; that stretch reads YL.

It belongs to the AAA ATPase family. As to quaternary structure, homohexamer. Assembles into a hexameric ring structure that caps the 20S proteasome core. Strongly interacts with the prokaryotic ubiquitin-like protein Pup through a hydrophobic interface; the interacting region of ARC lies in its N-terminal coiled-coil domain. There is one Pup binding site per ARC hexamer ring. Upon ATP-binding, the C-terminus of ARC interacts with the alpha-rings of the proteasome core, possibly by binding to the intersubunit pockets.

It functions in the pathway protein degradation; proteasomal Pup-dependent pathway. In terms of biological role, ATPase which is responsible for recognizing, binding, unfolding and translocation of pupylated proteins into the bacterial 20S proteasome core particle. May be essential for opening the gate of the 20S proteasome via an interaction with its C-terminus, thereby allowing substrate entry and access to the site of proteolysis. Thus, the C-termini of the proteasomal ATPase may function like a 'key in a lock' to induce gate opening and therefore regulate proteolysis. This chain is Proteasome-associated ATPase, found in Mycobacterium marinum (strain ATCC BAA-535 / M).